Reading from the N-terminus, the 371-residue chain is 4-hydroxy-3-methylbut-2-en-1-yl diphosphate synthase (flavodoxin) (371 aa).

Residues Cys272, Cys275, Cys307, and Glu314 each coordinate [4Fe-4S] cluster.

It belongs to the IspG family. It depends on [4Fe-4S] cluster as a cofactor.

The enzyme catalyses (2E)-4-hydroxy-3-methylbut-2-enyl diphosphate + oxidized [flavodoxin] + H2O + 2 H(+) = 2-C-methyl-D-erythritol 2,4-cyclic diphosphate + reduced [flavodoxin]. It functions in the pathway isoprenoid biosynthesis; isopentenyl diphosphate biosynthesis via DXP pathway; isopentenyl diphosphate from 1-deoxy-D-xylulose 5-phosphate: step 5/6. Functionally, converts 2C-methyl-D-erythritol 2,4-cyclodiphosphate (ME-2,4cPP) into 1-hydroxy-2-methyl-2-(E)-butenyl 4-diphosphate. This chain is 4-hydroxy-3-methylbut-2-en-1-yl diphosphate synthase (flavodoxin), found in Pseudomonas paraeruginosa (strain DSM 24068 / PA7) (Pseudomonas aeruginosa (strain PA7)).